The chain runs to 252 residues: MQICLMDETGATDGALSVLAARWGLEHDEDNPMALVLTPQHLELRKRDEPKLGGIFVDFVGGAMAHRRKFGGGRGEAVAKAVGIKGDYLPDVVDATAGLGRDAFVLASVGCRVRMLERNPVVAALLDDGLTRGYADADIGGWLQERLQLIHASSLTALTDITPRPQVVYLDPMFPHRQKSALVKKEMRVFQSLVGPDLDADGLLEPARQLATKRVVVKRPDYAPPLADVATPNAVVTKGHRFDIYAGTPLTE.

S-adenosyl-L-methionine-binding positions include R101–D102, E117–R118, S153–S154, and D171.

This sequence belongs to the methyltransferase superfamily. RsmJ family.

The protein resides in the cytoplasm. It catalyses the reaction guanosine(1516) in 16S rRNA + S-adenosyl-L-methionine = N(2)-methylguanosine(1516) in 16S rRNA + S-adenosyl-L-homocysteine + H(+). Specifically methylates the guanosine in position 1516 of 16S rRNA. The chain is Ribosomal RNA small subunit methyltransferase J from Salmonella choleraesuis (strain SC-B67).